The chain runs to 126 residues: Aspartate 1-decarboxylase (126 aa).

Serine 25 serves as the catalytic Schiff-base intermediate with substrate; via pyruvic acid. At serine 25 the chain carries Pyruvic acid (Ser). Threonine 57 serves as a coordination point for substrate. Tyrosine 58 functions as the Proton donor in the catalytic mechanism. Residue glycine 73–alanine 75 coordinates substrate.

It belongs to the PanD family. As to quaternary structure, heterooctamer of four alpha and four beta subunits. It depends on pyruvate as a cofactor. Post-translationally, is synthesized initially as an inactive proenzyme, which is activated by self-cleavage at a specific serine bond to produce a beta-subunit with a hydroxyl group at its C-terminus and an alpha-subunit with a pyruvoyl group at its N-terminus.

Its subcellular location is the cytoplasm. The catalysed reaction is L-aspartate + H(+) = beta-alanine + CO2. It participates in cofactor biosynthesis; (R)-pantothenate biosynthesis; beta-alanine from L-aspartate: step 1/1. In terms of biological role, catalyzes the pyruvoyl-dependent decarboxylation of aspartate to produce beta-alanine. The chain is Aspartate 1-decarboxylase from Proteus mirabilis (strain HI4320).